A 717-amino-acid chain; its full sequence is Delta-1-pyrroline-5-carboxylate synthase (717 aa).

The glutamate 5-kinase stretch occupies residues 1 to 296 (MDAVDSTRAF…WAPVGDVGAR (296 aa)). Substrate contacts are provided by serine 60, aspartate 157, and asparagine 176. Residues 196–197 (SD) and 236–242 (RGGMTAK) each bind ATP. Positions 297–717 (DMAVAARESS…YTHKDLTSHA (421 aa)) are gamma-glutamyl phosphate reductase.

It in the N-terminal section; belongs to the glutamate 5-kinase family. The protein in the C-terminal section; belongs to the gamma-glutamyl phosphate reductase family. In terms of tissue distribution, expressed at high levels in leaves and is inducible in roots subjected to salt stress.

It catalyses the reaction L-glutamate + ATP = L-glutamyl 5-phosphate + ADP. It carries out the reaction L-glutamate 5-semialdehyde + phosphate + NADP(+) = L-glutamyl 5-phosphate + NADPH + H(+). The protein operates within amino-acid biosynthesis; L-proline biosynthesis; L-glutamate 5-semialdehyde from L-glutamate: step 1/2. It functions in the pathway amino-acid biosynthesis; L-proline biosynthesis; L-glutamate 5-semialdehyde from L-glutamate: step 2/2. With respect to regulation, feedback regulated by proline. Functionally, P5CS plays a key role in proline biosynthesis, leading to osmoregulation in plants. In Actinidia deliciosa (Kiwi), this protein is Delta-1-pyrroline-5-carboxylate synthase.